We begin with the raw amino-acid sequence, 354 residues long: S-adenosylmethionine:tRNA ribosyltransferase-isomerase (354 aa).

It belongs to the QueA family. In terms of assembly, monomer.

The protein localises to the cytoplasm. It carries out the reaction 7-aminomethyl-7-carbaguanosine(34) in tRNA + S-adenosyl-L-methionine = epoxyqueuosine(34) in tRNA + adenine + L-methionine + 2 H(+). Its pathway is tRNA modification; tRNA-queuosine biosynthesis. Functionally, transfers and isomerizes the ribose moiety from AdoMet to the 7-aminomethyl group of 7-deazaguanine (preQ1-tRNA) to give epoxyqueuosine (oQ-tRNA). In Pseudomonas syringae pv. syringae (strain B728a), this protein is S-adenosylmethionine:tRNA ribosyltransferase-isomerase.